The primary structure comprises 383 residues: Geranylgeranyl pyrophosphate synthase esdpD (383 aa).

Residues K88, R91, and H120 each coordinate isopentenyl diphosphate. Mg(2+) contacts are provided by D150 and D154. R159 lines the dimethylallyl diphosphate pocket. R160 is an isopentenyl diphosphate binding site. Dimethylallyl diphosphate contacts are provided by K237, T238, and Q271. A Mg(2+)-binding site is contributed by D274. Residues N278, K288, and K298 each coordinate dimethylallyl diphosphate.

This sequence belongs to the FPP/GGPP synthase family. Requires Mg(2+) as cofactor.

The enzyme catalyses isopentenyl diphosphate + dimethylallyl diphosphate = (2E)-geranyl diphosphate + diphosphate. It carries out the reaction isopentenyl diphosphate + (2E)-geranyl diphosphate = (2E,6E)-farnesyl diphosphate + diphosphate. The catalysed reaction is isopentenyl diphosphate + (2E,6E)-farnesyl diphosphate = (2E,6E,10E)-geranylgeranyl diphosphate + diphosphate. It functions in the pathway secondary metabolite biosynthesis; terpenoid biosynthesis. Functionally, geranylgeranyl pyrophosphate synthase; part of the cluster that mediates the biosynthesis of shearones, diterpenoid pyrones (DPs) which are structurally diverse meroterpenoids consisting of a diterpene linked by a pyrone, and which may exhibit a range of bioactivities. Within the pathway, esdpD takes part to the biosynthesis of the molecular scaffold by providing geranylgeranyl pyrophosphate (GGPP) to the prenyltransferase esdpC for C-3 geranylgeranylation of the alpha-pyrone. The molecular scaffold is commonly biosynthesized by a series of enzymes including the non-reducing polyketide synthase (NR-PKS) esdpA that generates an alpha-pyrone; the prenyltransferase esdpC that attaches a geranylgeranyl pyrophosphate (GGPP) produced by the GGPP synthase (GGPPS) esdpD onto the pyrone unit; the FAD-dependent monooxygenase esdpE that converts an olefin on the diterpene unit into an epoxide; and the terpene cyclase esdpB that catalyzes the cyclization reactions to give the molecular backbone shearone A. In the modification steps, esdpF oxidizes the hydroxy group to a ketone at C-3 and esdpG then attaches hydroxy groups at both C-11 and C-12. After that, esdpI hydroxylates at C-20 and esdpH hydroxylates at C-6'. The ether bridge is generated by nucleophilic attack of the hydroxy group at C-20 to the carbonyl carbon at C-3. EsdpH can also functions prior to esdpI. The different combinations of these modification enzymes lead to the production of diverse shearone derivatives, shearone I being the end product of the pathway. The alpha-ketoglutarate-dependent dioxygenase esdpJ seems not to be involved in this pathway. The chain is Geranylgeranyl pyrophosphate synthase esdpD from Penicillium shearii (Eupenicillium shearii).